The chain runs to 142 residues: Hemoglobin subunit alpha (142 aa).

Positions 2 to 142 (VLSAADKGNV…VSTVLTSKYR (141 aa)) constitute a Globin domain. The residue at position 4 (serine 4) is a Phosphoserine. An N6-succinyllysine mark is found at lysine 8 and lysine 12. N6-acetyllysine; alternate is present on lysine 17. An N6-succinyllysine; alternate modification is found at lysine 17. Position 25 is a phosphotyrosine (tyrosine 25). A Phosphoserine modification is found at serine 36. Residue lysine 41 is modified to N6-succinyllysine. Phosphoserine is present on serine 50. Histidine 59 contributes to the O2 binding site. Histidine 88 is a heme b binding site. Residue serine 103 is modified to Phosphoserine. A Phosphothreonine modification is found at threonine 109. At serine 125 the chain carries Phosphoserine. 2 positions are modified to phosphothreonine: threonine 135 and threonine 138. Serine 139 carries the phosphoserine modification.

This sequence belongs to the globin family. In terms of assembly, heterotetramer of two alpha chains and two beta chains. In terms of tissue distribution, red blood cells.

Involved in oxygen transport from the lung to the various peripheral tissues. Its function is as follows. Hemopressin acts as an antagonist peptide of the cannabinoid receptor CNR1. Hemopressin-binding efficiently blocks cannabinoid receptor CNR1 and subsequent signaling. This Bos taurus (Bovine) protein is Hemoglobin subunit alpha (HBA).